An 84-amino-acid polypeptide reads, in one-letter code: Large ribosomal subunit protein bL27 (84 aa).

Residues 1–21 form a disordered region; it reads MAHKKGVGSSRNGRDSDGQRL.

This sequence belongs to the bacterial ribosomal protein bL27 family.

The sequence is that of Large ribosomal subunit protein bL27 from Trichlorobacter lovleyi (strain ATCC BAA-1151 / DSM 17278 / SZ) (Geobacter lovleyi).